A 102-amino-acid chain; its full sequence is Putative pterin-4-alpha-carbinolamine dehydratase (102 aa).

Belongs to the pterin-4-alpha-carbinolamine dehydratase family.

The enzyme catalyses (4aS,6R)-4a-hydroxy-L-erythro-5,6,7,8-tetrahydrobiopterin = (6R)-L-erythro-6,7-dihydrobiopterin + H2O. The protein is Putative pterin-4-alpha-carbinolamine dehydratase of Burkholderia ambifaria (strain ATCC BAA-244 / DSM 16087 / CCUG 44356 / LMG 19182 / AMMD) (Burkholderia cepacia (strain AMMD)).